Reading from the N-terminus, the 91-residue chain is PqqA binding protein (91 aa).

It belongs to the PqqD family. Monomer. Interacts with PqqE.

It participates in cofactor biosynthesis; pyrroloquinoline quinone biosynthesis. Functions as a PqqA binding protein and presents PqqA to PqqE, in the pyrroloquinoline quinone (PQQ) biosynthetic pathway. The protein is PqqA binding protein of Pseudomonas putida (strain W619).